Here is a 287-residue protein sequence, read N- to C-terminus: 4-hydroxybenzoate octaprenyltransferase (287 aa).

Helical transmembrane passes span 30-50, 89-109, 133-153, 158-178, 199-221, and 267-287; these read ALWI…FTVG, WEAV…ILPL, FFAI…PMAF, GHVP…SVAY, ALTF…LGIY, and NNWL…AGSF.

This sequence belongs to the UbiA prenyltransferase family. Requires Mg(2+) as cofactor.

The protein resides in the cell inner membrane. The catalysed reaction is all-trans-octaprenyl diphosphate + 4-hydroxybenzoate = 4-hydroxy-3-(all-trans-octaprenyl)benzoate + diphosphate. Its pathway is cofactor biosynthesis; ubiquinone biosynthesis. Catalyzes the prenylation of para-hydroxybenzoate (PHB) with an all-trans polyprenyl group. Mediates the second step in the final reaction sequence of ubiquinone-8 (UQ-8) biosynthesis, which is the condensation of the polyisoprenoid side chain with PHB, generating the first membrane-bound Q intermediate 3-octaprenyl-4-hydroxybenzoate. The polypeptide is 4-hydroxybenzoate octaprenyltransferase (Paraburkholderia phytofirmans (strain DSM 17436 / LMG 22146 / PsJN) (Burkholderia phytofirmans)).